We begin with the raw amino-acid sequence, 23 residues long: Potassium channel toxin kappa-KTx 1.2 (23 aa).

2 disulfides stabilise this stretch: Cys-4–Cys-22 and Cys-8–Cys-18. The residue at position 22 (Cys-22) is a Cysteine amide.

This sequence belongs to the short scorpion toxin superfamily. Potassium channel inhibitor kappa-KTx family. Kappa-KTx 1 subfamily. In terms of processing, the two disulfide isomers globular (C1-C3, C2-C4) and beads (C1-C2, C3-C4) do not show activity on Kv10.1/KCNH1/EAG1. Expressed by the venom gland.

The protein localises to the secreted. Functionally, shows weak blocking activity on voltage-gated potassium channels Kv10.1/KCNH1/EAG1 (IC(50)=26 uM), Kv1.2/KCNA2 (Kd=150 uM), Kv1.3/KCNA3 (Kd=40 uM), Kv1.6/KCNA3 (16.6% inhibition at 40 uM toxin). The block is dose-dependent, voltage-independent, and reversible. Also shows a weak inhibitory activity on the plant pathogen F.culmorum growth (IC(50)=18.8-37.7 uM). In Chersonesometrus fulvipes (Indian black scorpion), this protein is Potassium channel toxin kappa-KTx 1.2.